We begin with the raw amino-acid sequence, 166 residues long: MSDLRRKGWWNVPDYFHSPLVFDMEEDKEDYIFGPHDEYLHTLEVHSNTLIQLERWFTPTGQTRVTVVGPLKARLWVMDMIRKVGSKNNLDQIKGKMMLLQIRDHPLRDRDLELHPESGSSLWITTMNDTTFVEVPHFLRFPLTVAWLFCGFVRILGIHNFADLHW.

Residues 19 to 78 (PLVFDMEEDKEDYIFGPHDEYLHTLEVHSNTLIQLERWFTPTGQTRVTVVGPLKARLWVM) form the KH; atypical domain.

Belongs to the KHDC1 family.

It localises to the cytoplasm. Its function is as follows. Has pro-apoptotic activity. This chain is KH homology domain-containing protein 1A (Khdc1a), found in Mus musculus (Mouse).